Here is a 67-residue protein sequence, read N- to C-terminus: Large ribosomal subunit protein bL35 (67 aa).

Positions 1-16 (MPKMKTKSGAKKRFRV) are enriched in basic residues. Residues 1 to 25 (MPKMKTKSGAKKRFRVRPGGTVKRG) form a disordered region.

This sequence belongs to the bacterial ribosomal protein bL35 family.

The sequence is that of Large ribosomal subunit protein bL35 from Polaromonas sp. (strain JS666 / ATCC BAA-500).